Here is a 243-residue protein sequence, read N- to C-terminus: Zinc import ATP-binding protein ZnuC (243 aa).

The 216-residue stretch at 4–219 (ITVENLSVRY…PEYRALFGTG (216 aa)) folds into the ABC transporter domain. 36 to 43 (GPNGSGKT) is a binding site for ATP.

It belongs to the ABC transporter superfamily. Zinc importer (TC 3.A.1.15.5) family. The complex is composed of two ATP-binding proteins (ZnuC), two transmembrane proteins (ZnuB) and a solute-binding protein (ZnuA).

It is found in the cell inner membrane. It catalyses the reaction Zn(2+)(out) + ATP(in) + H2O(in) = Zn(2+)(in) + ADP(in) + phosphate(in) + H(+)(in). Its function is as follows. Part of the ABC transporter complex ZnuABC involved in zinc import. Responsible for energy coupling to the transport system. The polypeptide is Zinc import ATP-binding protein ZnuC (Jannaschia sp. (strain CCS1)).